We begin with the raw amino-acid sequence, 373 residues long: MNFEIYNEEIDHKLEAYDYCLDESLIAGKPSKVRHESRLMIVRDSSLKEDYSTNKYTKDLLAELREGDLVVINDTKVMKARLKVELENGQLVELLVLEKSDQSTWLCLAKPAKKLKINKQLNLKSPFAKDIKLKISGIDDETGGRFIKFPENINDLISMNKLLDIFGEIPIPPYIKSSEEESFHENSYQTEYACNPGAVAAPTAGLHLSKSLISNLKKKGILVMPITLHVGYGTFKPIDQEDLSDLKLHKEWVSVSKKVVEEIKRIKKTDRRVIAIGTTSVRALESCYSYAMKDFIPIAKYVDLVIKPGYKFKAVDGLLTNFHLPKSSLLLLVSAMIGRERLLDLYKKATKEKFRFFSYGDAMYISPDSFLEK.

Belongs to the QueA family. As to quaternary structure, monomer.

Its subcellular location is the cytoplasm. The catalysed reaction is 7-aminomethyl-7-carbaguanosine(34) in tRNA + S-adenosyl-L-methionine = epoxyqueuosine(34) in tRNA + adenine + L-methionine + 2 H(+). The protein operates within tRNA modification; tRNA-queuosine biosynthesis. Transfers and isomerizes the ribose moiety from AdoMet to the 7-aminomethyl group of 7-deazaguanine (preQ1-tRNA) to give epoxyqueuosine (oQ-tRNA). The sequence is that of S-adenosylmethionine:tRNA ribosyltransferase-isomerase from Prochlorococcus marinus (strain MIT 9515).